A 648-amino-acid chain; its full sequence is Macrolide export ATP-binding/permease protein MacB (648 aa).

The 246-residue stretch at Ile6 to Ile251 folds into the ABC transporter domain. Gly42–Ser49 contacts ATP. 4 consecutive transmembrane segments (helical) span residues Leu273 to Gly293, Val528 to Val548, Phe572 to Leu592, and Ser613 to Ala633.

Belongs to the ABC transporter superfamily. Macrolide exporter (TC 3.A.1.122) family. As to quaternary structure, homodimer.

The protein resides in the cell inner membrane. Its function is as follows. Non-canonical ABC transporter that contains transmembrane domains (TMD), which form a pore in the inner membrane, and an ATP-binding domain (NBD), which is responsible for energy generation. Confers resistance against macrolides. This Agrobacterium fabrum (strain C58 / ATCC 33970) (Agrobacterium tumefaciens (strain C58)) protein is Macrolide export ATP-binding/permease protein MacB.